Consider the following 345-residue polypeptide: Telomere-binding protein cav (345 aa).

The segment at 115–337 is required for binding to Su(var)205; the sequence is RRKMVQPYPE…TITFQNTESE (223 aa). 2 disordered regions span residues 145-180 and 200-231; these read RLDR…HEDQ and PPGV…INRP. Short sequence motifs (su(var)205-binding Pro-containing repeat) lie at residues 231–237 and 298–304; these read PETEINE and PETEMNE.

In terms of assembly, component of the HipHop-HOAP telomere capping complex, composed of at least HipHop and cav/HOAP, and may include Su(var)205/HP1; HipHop and cav/HOAP, but not Su(var)205, are interdependent for their protein stability. Interacts with HipHop (via N-terminus). Interacts (via C-terminus) with Su(var)205/HP1 dimer (via hinge and chromoshadow domain) and Orc1; possibly interacts with other components of the origin recognition complex (ORC). Each molecule of cav/HOAP interacts with 2 molecules of Su(var)205/HP1. The HipHop-HOAP complex recruits the MTV complex, consisting of moi/modigliani, tea and ver/verrocchio, to telomeres, forming the terminin telomere-capping complex. Interacts with moi/modigliani; the interaction is direct. Interacts with ver/verrochio; the interaction is direct. Interacts with HP6, which is also part of the terminin complex. Interacts (via N-terminus) with peo/pendolino (via N-terminus); the interaction is direct.

It is found in the nucleus. The protein localises to the chromosome. Its subcellular location is the telomere. Functionally, part of the HipHop-HOAP complex that recruits the MTV complex to form the terminin telomere-capping complex, which binds to chromosome ends in a sequence-independent manner and prevents telomere fusion. Telomere capping is independent of the origin recognition complex (ORC). The chain is Telomere-binding protein cav from Drosophila melanogaster (Fruit fly).